The chain runs to 188 residues: dCTP deaminase (188 aa).

DCTP contacts are provided by residues 111 to 116 (KSTYAR), 135 to 137 (TLE), glutamine 156, tyrosine 170, and glutamine 180. Residue glutamate 137 is the Proton donor/acceptor of the active site.

This sequence belongs to the dCTP deaminase family. As to quaternary structure, homotrimer.

It catalyses the reaction dCTP + H2O + H(+) = dUTP + NH4(+). Its pathway is pyrimidine metabolism; dUMP biosynthesis; dUMP from dCTP (dUTP route): step 1/2. Functionally, catalyzes the deamination of dCTP to dUTP. This is dCTP deaminase from Francisella philomiragia subsp. philomiragia (strain ATCC 25017 / CCUG 19701 / FSC 153 / O#319-036).